Reading from the N-terminus, the 180-residue chain is Large ribosomal subunit protein uL5 (180 aa).

Belongs to the universal ribosomal protein uL5 family. As to quaternary structure, part of the 50S ribosomal subunit; part of the 5S rRNA/L5/L18/L25 subcomplex. Contacts the 5S rRNA and the P site tRNA. Forms a bridge to the 30S subunit in the 70S ribosome.

This is one of the proteins that bind and probably mediate the attachment of the 5S RNA into the large ribosomal subunit, where it forms part of the central protuberance. In the 70S ribosome it contacts protein S13 of the 30S subunit (bridge B1b), connecting the 2 subunits; this bridge is implicated in subunit movement. Contacts the P site tRNA; the 5S rRNA and some of its associated proteins might help stabilize positioning of ribosome-bound tRNAs. In Rippkaea orientalis (strain PCC 8801 / RF-1) (Cyanothece sp. (strain PCC 8801)), this protein is Large ribosomal subunit protein uL5.